Reading from the N-terminus, the 436-residue chain is Immediate-early phosphoprotein 57 (436 aa).

Residues 71–140 (VPKRERSKTP…TPSNQNPLTE (70 aa)) are disordered. The span at 104–119 (QRPAPSARSRRPQPYS) shows a compositional bias: low complexity. A compositionally biased stretch (polar residues) spans 127 to 138 (KPQSTPSNQNPL).

This sequence belongs to the herpesviridae UL69 family.

It localises to the host nucleus. The protein resides in the host cytoplasm. In terms of biological role, acts at a post-transcriptional level to regulate viral gene expression. This is Immediate-early phosphoprotein 57 (57) from Alcelaphine herpesvirus 1 (strain C500) (AlHV-1).